We begin with the raw amino-acid sequence, 245 residues long: Probable inactive carboxylesterase Os04g0669700 (245 aa).

Catalysis depends on charge relay system residues Ser115 and His201.

The protein belongs to the AB hydrolase superfamily. AB hydrolase 2 family.

The chain is Probable inactive carboxylesterase Os04g0669700 from Oryza sativa subsp. japonica (Rice).